Consider the following 314-residue polypeptide: Leucine-rich repeat-containing protein 52 (314 aa).

A signal peptide spans 1–23 (MSLASGPSSKLLLFSLGMGLVSG). Residues 24–53 (SKCPNKCVCQDQEVACIDLHLTEYPADIPL) enclose the LRRNT domain. The Extracellular portion of the chain corresponds to 24-244 (SKCPNKCVCQ…MCITHLDQQD (221 aa)). Disulfide bonds link Cys-26-Cys-32 and Cys-30-Cys-39. LRR repeat units lie at residues 54 to 73 (NTRR…ALQL), 78 to 99 (DLVY…TFIG), 102 to 123 (RLIY…SFSV), 126 to 148 (NLVR…VFAN), and 151 to 172 (SLRY…GFHH). Asn-112, Asn-131, and Asn-148 each carry an N-linked (GlcNAc...) asparagine glycan. Residues 184–238 (NPWICNCSFLDFTIHLLVSHMDHPDAQNATCTEPAELKGWPITKVGNPLQYMCIT) enclose the LRRCT domain. 2 disulfide bridges follow: Cys-188-Cys-214 and Cys-190-Cys-236. N-linked (GlcNAc...) asparagine glycosylation is found at Asn-189 and Asn-211. The helical transmembrane segment at 245 to 265 (YIFLLLIGFCIFAAGTVAAWL) threads the bilayer. Residues 266 to 314 (TGVCAVLYQNALRTSSGDDTEDETGSRFANQIFRSNTHLGPIRRFPELI) are Cytoplasmic-facing.

As to quaternary structure, interacts with KCNMA1. Interacts with KCNU1; this interaction may be required for LRRC52 stability and changes the channel gating properties. In terms of processing, N-glycosylated. As to expression, testis-specific (at protein level). At the mRNA level, also detected in kidney, ventricle, spinal cord and skeletal muscle, although at lower levels compared to testis. Expression in testis at the protein level requires the presence of KCNU1.

The protein resides in the cell membrane. Its function is as follows. Auxiliary protein of the large-conductance, voltage and calcium-activated potassium channel (BK alpha). Modulates gating properties by producing a marked shift in the BK channel's voltage dependence of activation in the hyperpolarizing direction, and in the absence of calcium. KCNU1 channel auxiliary protein. Modulates KCNU1 gating properties, shifting KCNU1 gating to more negative potentials at a given pH. The chain is Leucine-rich repeat-containing protein 52 (Lrrc52) from Mus musculus (Mouse).